We begin with the raw amino-acid sequence, 317 residues long: Glycerol-3-phosphate dehydrogenase [NAD(P)+] (317 aa).

Residues serine 14, phenylalanine 15, arginine 35, and lysine 109 each coordinate NADPH. Lysine 109 and glycine 137 together coordinate sn-glycerol 3-phosphate. NADPH is bound at residue alanine 141. Residues lysine 192, aspartate 248, serine 258, arginine 259, and asparagine 260 each contribute to the sn-glycerol 3-phosphate site. The active-site Proton acceptor is lysine 192. Residue arginine 259 coordinates NADPH. Residues leucine 283 and glutamate 285 each coordinate NADPH.

This sequence belongs to the NAD-dependent glycerol-3-phosphate dehydrogenase family.

It localises to the cytoplasm. The catalysed reaction is sn-glycerol 3-phosphate + NAD(+) = dihydroxyacetone phosphate + NADH + H(+). The enzyme catalyses sn-glycerol 3-phosphate + NADP(+) = dihydroxyacetone phosphate + NADPH + H(+). It functions in the pathway membrane lipid metabolism; glycerophospholipid metabolism. Catalyzes the reduction of the glycolytic intermediate dihydroxyacetone phosphate (DHAP) to sn-glycerol 3-phosphate (G3P), the key precursor for phospholipid synthesis. The polypeptide is Glycerol-3-phosphate dehydrogenase [NAD(P)+] (Rickettsia akari (strain Hartford)).